We begin with the raw amino-acid sequence, 942 residues long: Lon protease homolog 4, chloroplastic/mitochondrial (942 aa).

At Ser-54 the chain carries Phosphoserine. Residues 79-301 enclose the Lon N-terminal domain; sequence VIALPLPHKP…LTLELVKKEV (223 aa). 456-463 is an ATP binding site; that stretch reads GPTGVGKT. Residues 673–725 form a disordered region; that stretch reads ISDDVTTDTEETKSLAKTDLESPETSAEGSTVLTDELATGDPTESTTEQSGEV. Residues 682–692 are compositionally biased toward basic and acidic residues; sequence EETKSLAKTDL. Positions 695–705 are enriched in polar residues; sequence PETSAEGSTVL. Positions 756 to 940 constitute a Lon proteolytic domain; it reads QTPVGVVMGL…EQIFELAFGY (185 aa). Catalysis depends on residues Ser-846 and Lys-889.

This sequence belongs to the peptidase S16 family. In terms of assembly, homohexamer or homoheptamer. Organized in a ring with a central cavity.

Its subcellular location is the mitochondrion matrix. The protein resides in the plastid. It localises to the chloroplast thylakoid membrane. The enzyme catalyses Hydrolysis of proteins in presence of ATP.. In terms of biological role, ATP-dependent serine protease that mediates the selective degradation of misfolded, unassembled or oxidatively damaged polypeptides as well as certain short-lived regulatory proteins in the mitochondrial matrix. May also have a chaperone function in the assembly of inner membrane protein complexes. Participates in the regulation of mitochondrial gene expression and in the maintenance of the integrity of the mitochondrial genome. Binds to mitochondrial DNA in a site-specific manner. The sequence is that of Lon protease homolog 4, chloroplastic/mitochondrial (LON4) from Arabidopsis thaliana (Mouse-ear cress).